Here is a 382-residue protein sequence, read N- to C-terminus: MKAIHFGAGNIGRGFIGKVLSDAGIKVTFADVNKTVVNALIARNEYDVNVVGADCVVEKVTNVTAVNSAGSEIVKLIAESDLVTTAVGPTVLNIIAKTIADAIELRLNSGNKFPLNIIACENMVRGTSQLKAQVFKYLPESLHVQSDQTIGFVDCAVDRIVPPAEAGETDPLAVTVETFSEWIVDQTQFKGEIPTIKGMECTDNLMAFVERKLFTLNTGHLITAYLGVLAGYETIKESIEDEAIRSDVTAAMQESGEVLIRRYGFDPQAHAAYIQKILGRFANPYLRDEVDRVGRQPIRKLSANDRLIKPLNGTLEYGLPNGHLIKGIAAAFLYKNDQDPQAVELQAMFAEKGLAATLAHYSGLAVDSETVKLVEQAYQSLK.

3–14 (AIHFGAGNIGRG) lines the NAD(+) pocket.

Belongs to the mannitol dehydrogenase family.

The enzyme catalyses D-mannitol 1-phosphate + NAD(+) = beta-D-fructose 6-phosphate + NADH + H(+). The chain is Mannitol-1-phosphate 5-dehydrogenase from Psychromonas ingrahamii (strain DSM 17664 / CCUG 51855 / 37).